Reading from the N-terminus, the 689-residue chain is Glycine--tRNA ligase beta subunit (689 aa).

Belongs to the class-II aminoacyl-tRNA synthetase family. In terms of assembly, tetramer of two alpha and two beta subunits.

It is found in the cytoplasm. The enzyme catalyses tRNA(Gly) + glycine + ATP = glycyl-tRNA(Gly) + AMP + diphosphate. The polypeptide is Glycine--tRNA ligase beta subunit (Glaesserella parasuis serovar 5 (strain SH0165) (Haemophilus parasuis)).